A 478-amino-acid polypeptide reads, in one-letter code: Succinyl-CoA:acetate/propanoyl-CoA:succinate CoA transferase (478 aa).

Residues 1-30 constitute a mitochondrion transit peptide; sequence MYQLAFLRCRYASPIVREARRAFHASRKCQ. 256–260 contacts CoA; that stretch reads GIGAI. Glutamate 279 serves as the catalytic 5-glutamyl coenzyme A thioester intermediate. Isoleucine 354, glycine 377, and lysine 404 together coordinate CoA.

This sequence belongs to the acetyl-CoA hydrolase/transferase family.

Its subcellular location is the mitochondrion. The catalysed reaction is succinyl-CoA + acetate = succinate + acetyl-CoA. The enzyme catalyses propanoyl-CoA + succinate = propanoate + succinyl-CoA. In terms of biological role, transferase involved in anaerobic fumarate-respiration in the mitochondria. Catalyzes the transfer of the CoA moiety of acetyl-CoA or propionyl-CoA to succinate, thereby forming acetate and propionate, respectively. Acetate and propionate are the two major metabolic end products in the anaerobic mitochondrial metabolism of F.hepatica. Also displays CoA transferase activities from acetyl-CoA to propionate, acetate and butyrate. The chain is Succinyl-CoA:acetate/propanoyl-CoA:succinate CoA transferase from Fasciola hepatica (Liver fluke).